Here is a 163-residue protein sequence, read N- to C-terminus: Large ribosomal subunit protein uL10 (163 aa).

Belongs to the universal ribosomal protein uL10 family. In terms of assembly, part of the ribosomal stalk of the 50S ribosomal subunit. The N-terminus interacts with L11 and the large rRNA to form the base of the stalk. The C-terminus forms an elongated spine to which L12 dimers bind in a sequential fashion forming a multimeric L10(L12)X complex.

In terms of biological role, forms part of the ribosomal stalk, playing a central role in the interaction of the ribosome with GTP-bound translation factors. The polypeptide is Large ribosomal subunit protein uL10 (Actinobacillus pleuropneumoniae serotype 5b (strain L20)).